The following is a 432-amino-acid chain: Adenosylhomocysteinase (432 aa).

Ser-2 is modified (N-acetylserine). 3 residues coordinate substrate: Thr-57, Asp-131, and Glu-156. Phosphoserine is present on Ser-183. Positions 183 to 350 (SVTKSKFDNL…EGRLVNLGCA (168 aa)) are NAD binding. Positions 186 and 190 each coordinate substrate. At Lys-186 the chain carries N6-(2-hydroxyisobutyryl)lysine. Tyr-193 carries the post-translational modification Phosphotyrosine.

The protein belongs to the adenosylhomocysteinase family. In terms of assembly, homotetramer. Interaction with AHCYL1. The cofactor is NAD(+).

It is found in the cytoplasm. The protein localises to the melanosome. The protein resides in the nucleus. It localises to the endoplasmic reticulum. It catalyses the reaction S-adenosyl-L-homocysteine + H2O = L-homocysteine + adenosine. Its pathway is amino-acid biosynthesis; L-homocysteine biosynthesis; L-homocysteine from S-adenosyl-L-homocysteine: step 1/1. In terms of biological role, catalyzes the hydrolysis of S-adenosyl-L-homocysteine to form adenosine and homocysteine. Binds copper ions. The polypeptide is Adenosylhomocysteinase (AHCY) (Sus scrofa (Pig)).